The sequence spans 160 residues: MSVLNTFLVIVALILCYVNDFPVTGHEVQLPPGTKFFCQECQMTAVIHVLKHRGCKPKAIPSFACIGKCTSYVQVSGSKIWQMERTCNCCQESGEREATVVLFCPDAQNEEKRFRKVSTKAPLQCMCRPCGSIEESSIIPQEVAGYSEEGPLYNHFRKSL.

A signal peptide spans 1–20 (MSVLNTFLVIVALILCYVND). Residues 38–131 (CQECQMTAVI…PLQCMCRPCG (94 aa)) enclose the CTCK domain. Cystine bridges form between Cys41/Cys90, Cys55/Cys104, Cys65/Cys125, Cys69/Cys127, and Cys87/Cys130.

As to quaternary structure, heterodimer of burs and pburs.

Its subcellular location is the secreted. Its function is as follows. Final heterodimeric neurohormone released at the end of the molting cycle, involved in the sclerotization (tanning) of the insect cuticle, melanization and wing spreading. This chain is Bursicon, found in Bombyx mori (Silk moth).